The chain runs to 470 residues: Cysteine--tRNA ligase (470 aa).

Position 27 (cysteine 27) interacts with Zn(2+). The 'HIGH' region signature appears at 29 to 39 (PTVYNFFHIGN). 3 residues coordinate Zn(2+): cysteine 211, histidine 236, and glutamate 240. A 'KMSKS' region motif is present at residues 268–272 (KMSKS). Lysine 271 is a binding site for ATP.

Belongs to the class-I aminoacyl-tRNA synthetase family. As to quaternary structure, monomer. Requires Zn(2+) as cofactor.

Its subcellular location is the cytoplasm. The catalysed reaction is tRNA(Cys) + L-cysteine + ATP = L-cysteinyl-tRNA(Cys) + AMP + diphosphate. This Clostridium botulinum (strain Eklund 17B / Type B) protein is Cysteine--tRNA ligase.